The chain runs to 159 residues: Transcription elongation factor GreA (159 aa).

This sequence belongs to the GreA/GreB family.

In terms of biological role, necessary for efficient RNA polymerase transcription elongation past template-encoded arresting sites. The arresting sites in DNA have the property of trapping a certain fraction of elongating RNA polymerases that pass through, resulting in locked ternary complexes. Cleavage of the nascent transcript by cleavage factors such as GreA or GreB allows the resumption of elongation from the new 3'terminus. GreA releases sequences of 2 to 3 nucleotides. In Buchnera aphidicola subsp. Acyrthosiphon pisum (strain APS) (Acyrthosiphon pisum symbiotic bacterium), this protein is Transcription elongation factor GreA.